The chain runs to 227 residues: Chloronitrobenzene nitroreductase (227 aa).

Residue 14-18 (RRTKR) coordinates FMN. Ser44 provides a ligand contact to NADP(+). FMN is bound by residues 172–173 (GL) and Arg215.

It belongs to the nitroreductase family. Requires FMN as cofactor.

The catalysed reaction is N-phenylhydroxylamine + 2 NADP(+) + H2O = nitrobenzene + 2 NADPH + 2 H(+). The protein operates within xenobiotic degradation; nitrobenzene degradation. It participates in xenobiotic degradation; 4-chloronitrobenzene degradation. Involved in the biodegradation of chlorinated nitroaromatic compounds. Catalyzes the reduction of 4-chloronitrobenzene to yield 1-hydroxylamino-4-chlorobenzene. Probably also able to catalyze the two-electron reduction of nitrobenzene (NB) to produce a nitrosobenzene (NOB) intermediate, which is immediately reduced to hydroxylaminobenzene (HAB) by a second two-electron transfer. The sequence is that of Chloronitrobenzene nitroreductase from Comamonas testosteroni (Pseudomonas testosteroni).